A 343-amino-acid polypeptide reads, in one-letter code: Aspartate-semialdehyde dehydrogenase (343 aa).

11-14 provides a ligand contact to NADP(+); sequence TGMV. Residue Arg-109 coordinates phosphate. Residue Cys-148 is the Acyl-thioester intermediate of the active site. Gln-174 contacts substrate. Position 177-178 (177-178) interacts with NADP(+); it reads SG. Glu-200 is a binding site for substrate. Position 203 (Lys-203) interacts with phosphate. Arg-233 provides a ligand contact to substrate. His-240 serves as the catalytic Proton acceptor. Residue 321 to 322 coordinates NADP(+); sequence NT.

Belongs to the aspartate-semialdehyde dehydrogenase family. As to quaternary structure, homodimer.

The enzyme catalyses L-aspartate 4-semialdehyde + phosphate + NADP(+) = 4-phospho-L-aspartate + NADPH + H(+). The protein operates within amino-acid biosynthesis; L-lysine biosynthesis via DAP pathway; (S)-tetrahydrodipicolinate from L-aspartate: step 2/4. Its pathway is amino-acid biosynthesis; L-methionine biosynthesis via de novo pathway; L-homoserine from L-aspartate: step 2/3. It participates in amino-acid biosynthesis; L-threonine biosynthesis; L-threonine from L-aspartate: step 2/5. Catalyzes the NADPH-dependent formation of L-aspartate-semialdehyde (L-ASA) by the reductive dephosphorylation of L-aspartyl-4-phosphate. This Archaeoglobus fulgidus (strain ATCC 49558 / DSM 4304 / JCM 9628 / NBRC 100126 / VC-16) protein is Aspartate-semialdehyde dehydrogenase.